The chain runs to 306 residues: Non-structural protein 3 (306 aa).

The protein is Non-structural protein 3 (Segment-7) of Banna virus (BAV).